Reading from the N-terminus, the 294-residue chain is UDP-3-O-acyl-N-acetylglucosamine deacetylase (294 aa).

Zn(2+)-binding residues include histidine 75, histidine 232, and aspartate 236. Catalysis depends on histidine 259, which acts as the Proton donor.

This sequence belongs to the LpxC family. Requires Zn(2+) as cofactor.

The enzyme catalyses a UDP-3-O-[(3R)-3-hydroxyacyl]-N-acetyl-alpha-D-glucosamine + H2O = a UDP-3-O-[(3R)-3-hydroxyacyl]-alpha-D-glucosamine + acetate. It participates in glycolipid biosynthesis; lipid IV(A) biosynthesis; lipid IV(A) from (3R)-3-hydroxytetradecanoyl-[acyl-carrier-protein] and UDP-N-acetyl-alpha-D-glucosamine: step 2/6. Functionally, catalyzes the hydrolysis of UDP-3-O-myristoyl-N-acetylglucosamine to form UDP-3-O-myristoylglucosamine and acetate, the committed step in lipid A biosynthesis. In Sulfurimonas denitrificans (strain ATCC 33889 / DSM 1251) (Thiomicrospira denitrificans (strain ATCC 33889 / DSM 1251)), this protein is UDP-3-O-acyl-N-acetylglucosamine deacetylase.